We begin with the raw amino-acid sequence, 82 residues long: Large ribosomal subunit protein uL23 (82 aa).

This sequence belongs to the universal ribosomal protein uL23 family. In terms of assembly, part of the 50S ribosomal subunit. Contacts protein L29.

In terms of biological role, binds to 23S rRNA. One of the proteins that surrounds the polypeptide exit tunnel on the outside of the ribosome. This Natronomonas pharaonis (strain ATCC 35678 / DSM 2160 / CIP 103997 / JCM 8858 / NBRC 14720 / NCIMB 2260 / Gabara) (Halobacterium pharaonis) protein is Large ribosomal subunit protein uL23.